Here is a 360-residue protein sequence, read N- to C-terminus: mRNA cap guanine-N(7) methyltransferase (360 aa).

Residues 1–62 (MSSSNSRVHE…NRHENNGNAQ (62 aa)) are disordered. Positions 7-19 (RVHEEQPPTENRR) are enriched in basic and acidic residues. The 276-residue stretch at 83–358 (SPIIQLKRFN…FYLAFAFEKR (276 aa)) folds into the mRNA cap 0 methyltransferase domain. 92–93 (NN) contributes to the mRNA binding site. 6 residues coordinate S-adenosyl-L-methionine: K96, G118, D140, D168, Q191, and Y196.

It belongs to the class I-like SAM-binding methyltransferase superfamily. mRNA cap 0 methyltransferase family. Interacts with cdk9.

It is found in the nucleus. The catalysed reaction is a 5'-end (5'-triphosphoguanosine)-ribonucleoside in mRNA + S-adenosyl-L-methionine = a 5'-end (N(7)-methyl 5'-triphosphoguanosine)-ribonucleoside in mRNA + S-adenosyl-L-homocysteine. Responsible for methylating the 5'-cap structure of mRNAs. This Schizosaccharomyces pombe (strain 972 / ATCC 24843) (Fission yeast) protein is mRNA cap guanine-N(7) methyltransferase (pcm1).